A 106-amino-acid chain; its full sequence is Replication restart protein PriB (106 aa).

The SSB domain occupies 4 to 103 (TNRLVLSGTV…LHAEQIEFID (100 aa)).

It belongs to the PriB family. In terms of assembly, homodimer. Interacts with PriA and DnaT. Component of the replication restart primosome. Primosome assembly occurs via a 'hand-off' mechanism. PriA binds to replication forks, subsequently PriB then DnaT bind; DnaT then displaces ssDNA to generate the helicase loading substrate.

In terms of biological role, involved in the restart of stalled replication forks, which reloads the replicative helicase on sites other than the origin of replication; the PriA-PriB pathway is the major replication restart pathway. During primosome assembly it facilitates complex formation between PriA and DnaT on DNA; stabilizes PriA on DNA. Stimulates the DNA unwinding activity of PriA helicase. This chain is Replication restart protein PriB, found in Yersinia pestis.